Consider the following 33-residue polypeptide: VTCFCRRRGCASRERHIGYCRFGNTIYRLCCRR.

Intrachain disulfides connect Cys-3-Cys-31, Cys-5-Cys-20, and Cys-10-Cys-30.

It belongs to the alpha-defensin family.

It is found in the secreted. Anti-fungal and bactericidal activity, greater against Gram-positive bacteria. The chain is Neutrophil defensin 1 from Mesocricetus auratus (Golden hamster).